The primary structure comprises 418 residues: 3-phosphoshikimate 1-carboxyvinyltransferase (418 aa).

3 residues coordinate 3-phosphoshikimate: K26, S27, and R31. K26 contributes to the phosphoenolpyruvate binding site. Phosphoenolpyruvate-binding residues include G97 and R125. Residues S170, S171, Q172, D297, N320, and K324 each contribute to the 3-phosphoshikimate site. Q172 contributes to the phosphoenolpyruvate binding site. Catalysis depends on D297, which acts as the Proton acceptor. Phosphoenolpyruvate contacts are provided by R328, R375, and K400.

It belongs to the EPSP synthase family. Monomer.

The protein resides in the cytoplasm. It carries out the reaction 3-phosphoshikimate + phosphoenolpyruvate = 5-O-(1-carboxyvinyl)-3-phosphoshikimate + phosphate. Its pathway is metabolic intermediate biosynthesis; chorismate biosynthesis; chorismate from D-erythrose 4-phosphate and phosphoenolpyruvate: step 6/7. Catalyzes the transfer of the enolpyruvyl moiety of phosphoenolpyruvate (PEP) to the 5-hydroxyl of shikimate-3-phosphate (S3P) to produce enolpyruvyl shikimate-3-phosphate and inorganic phosphate. The polypeptide is 3-phosphoshikimate 1-carboxyvinyltransferase (Pseudomonas savastanoi pv. phaseolicola (strain 1448A / Race 6) (Pseudomonas syringae pv. phaseolicola (strain 1448A / Race 6))).